The following is a 369-amino-acid chain: Peptide chain release factor 2 (369 aa).

Gln251 carries the post-translational modification N5-methylglutamine.

Belongs to the prokaryotic/mitochondrial release factor family. In terms of processing, methylated by PrmC. Methylation increases the termination efficiency of RF2.

It localises to the cytoplasm. Its function is as follows. Peptide chain release factor 2 directs the termination of translation in response to the peptide chain termination codons UGA and UAA. The sequence is that of Peptide chain release factor 2 (prfB) from Thermotoga maritima (strain ATCC 43589 / DSM 3109 / JCM 10099 / NBRC 100826 / MSB8).